The chain runs to 120 residues: Inner membrane protein YidG (120 aa).

Topologically, residues 1–21 (MPDSRKARRIADPGLQPERTS) are cytoplasmic. Residues 22–39 (LAWFRTMLGYGALMALAI) traverse the membrane as a helical segment. At 40–48 (KHNWHQAGM) the chain is on the periplasmic side. The helical transmembrane segment at 49–68 (LFWISIGILAIVALILWHYT) threads the bilayer. Residues 69–90 (RNRNLMDVTNSDFSQFHVVRDK) are Cytoplasmic-facing. A helical transmembrane segment spans residues 91–113 (FLISLAVLSLAILFAVTHIHQLI). Over 114-120 (VFIERVA) the chain is Periplasmic.

It is found in the cell inner membrane. The sequence is that of Inner membrane protein YidG (yidG) from Escherichia coli O157:H7.